The primary structure comprises 345 residues: C5a anaphylatoxin chemotactic receptor 1 (345 aa).

Topologically, residues 1–32 (MMVTVSYDYDYNSTFLPDGFVDNYVERLSFGD) are extracellular. Sulfotyrosine is present on residues Tyr-9 and Tyr-11. N-linked (GlcNAc...) asparagine glycosylation occurs at Asn-12. A helical membrane pass occupies residues 33–59 (LVAVVIMVVVFLVGVPGNALVVWVTAC). Residues 60–64 (EARRH) are Cytoplasmic-facing. Residues 65–88 (INAIWFLNLAAADLLSCLALPILL) traverse the membrane as a helical segment. The Extracellular segment spans residues 89–105 (VSTVHLNHWYFGDTACK). Cysteines 104 and 183 form a disulfide. The helical transmembrane segment at 106–127 (VLPSLILLNMYTSILLLATISA) threads the bilayer. Residues 128–148 (DRLLLVLSPIWCQRFRGGCLA) are Cytoplasmic-facing. Residues 149–169 (WTACGLAWVLALLLSSPSFLY) traverse the membrane as a helical segment. Topologically, residues 170-195 (RRTHNEHFSFKVYCVTDYGRDISKER) are extracellular. A helical membrane pass occupies residues 196–221 (AVALVRLLVGFIVPLITLTACYTFLL). Residues 222–237 (LRTWSRKATRSAKTVK) are Cytoplasmic-facing. Residues 238–260 (VVVAVVSSFFVFWLPYQVTGILL) traverse the membrane as a helical segment. Residues 261–277 (AWHSPNSATYRNTKALD) are Extracellular-facing. The chain crosses the membrane as a helical span at residues 278 to 298 (AVCVAFAYINCCINPIIYVVA). Residues 299-345 (GHGFQGRLLKSLPSVLRNVLTEESLDKRHQSFARSTVDTMPQKSESV) lie on the Cytoplasmic side of the membrane. A phosphoserine mark is found at Ser-309, Ser-312, Ser-322, Ser-329, and Ser-333.

The protein belongs to the G-protein coupled receptor 1 family. As to quaternary structure, homodimer. May also form higher-order oligomers. Interacts (when phosphorylated) with ARRB1 and ARRB2; the interaction is associated with internalization of C5aR. Sulfation plays a critical role in the association of C5aR with C5a, but no significant role in the ability of the receptor to transduce a signal and mobilize calcium in response to a small peptide agonist. In terms of processing, phosphorylated on serine residues in response to C5a binding, resulting in internalization of the receptor and short-term desensitization to C5a. In terms of tissue distribution, expressed strongly in macrophages and spleen. Weak expression detected in lung, liver, brain, heart and kidney.

It is found in the cell membrane. It localises to the cytoplasmic vesicle. Functionally, receptor for the chemotactic and inflammatory peptide anaphylatoxin C5a. The ligand interacts with at least two sites on the receptor: a high-affinity site on the extracellular N-terminus, and a second site in the transmembrane region which activates downstream signaling events. Receptor activation stimulates chemotaxis, granule enzyme release, intracellular calcium release and superoxide anion production. The protein is C5a anaphylatoxin chemotactic receptor 1 (C5AR1) of Cavia porcellus (Guinea pig).